We begin with the raw amino-acid sequence, 248 residues long: Coenzyme F420:L-glutamate ligase (248 aa).

GTP contacts are provided by residues 15 to 18 (IPLI), 45 to 46 (ET), and lysine 50. Aspartate 115 is a binding site for a divalent metal cation. Asparagine 118 contributes to the GTP binding site. Residues aspartate 155, serine 156, and glutamine 213 each contribute to the a divalent metal cation site. Residue 211–218 (MGQSDEGI) coordinates GTP.

Belongs to the CofE family. Homodimer. Mg(2+) serves as cofactor. It depends on Mn(2+) as a cofactor. K(+) is required as a cofactor.

It catalyses the reaction oxidized coenzyme F420-0 + GTP + L-glutamate = oxidized coenzyme F420-1 + GDP + phosphate + H(+). The enzyme catalyses oxidized coenzyme F420-1 + GTP + L-glutamate = oxidized coenzyme F420-2 + GDP + phosphate + H(+). Its pathway is cofactor biosynthesis; coenzyme F420 biosynthesis. In terms of biological role, catalyzes the GTP-dependent successive addition of two or more gamma-linked L-glutamates to the L-lactyl phosphodiester of 7,8-didemethyl-8-hydroxy-5-deazariboflavin (F420-0) to form coenzyme F420-0-glutamyl-glutamate (F420-2) or polyglutamated F420 derivatives. The chain is Coenzyme F420:L-glutamate ligase from Methanococcus maripaludis (strain C6 / ATCC BAA-1332).